The following is a 576-amino-acid chain: Aspartate--tRNA ligase, cytoplasmic 1 (576 aa).

The segment at 1-78 (MSETTPVPVG…NWGELPMNQS (78 aa)) is disordered. Basic and acidic residues predominate over residues 20–43 (LKKEQKKLEKEKKIAEAKAKKAAE). Glutamate 302 is a binding site for L-aspartate. An aspartate region spans residues 324–327 (QLYK). Arginine 346 contributes to the L-aspartate binding site. ATP-binding positions include 346–348 (RAE), 354–356 (RHL), and glutamate 499. Residues serine 502 and arginine 506 each contribute to the L-aspartate site. Position 547 to 550 (547 to 550 (GLER)) interacts with ATP.

It belongs to the class-II aminoacyl-tRNA synthetase family. Type 2 subfamily.

The protein localises to the cytoplasm. The enzyme catalyses tRNA(Asp) + L-aspartate + ATP = L-aspartyl-tRNA(Asp) + AMP + diphosphate. In Dictyostelium discoideum (Social amoeba), this protein is Aspartate--tRNA ligase, cytoplasmic 1 (aspS1).